The following is a 244-amino-acid chain: Ribonuclease 3 2 (244 aa).

One can recognise an RNase III domain in the interval 11–136 (LKALLRRLGL…LLGALYLSVG (126 aa)). A Mg(2+)-binding site is contributed by glutamate 50. Aspartate 54 is an active-site residue. Positions 122 and 125 each coordinate Mg(2+). Glutamate 125 is an active-site residue. Positions 164-234 (NYKEALQAWT…AQQAYQDFIA (71 aa)) constitute a DRBM domain.

Belongs to the ribonuclease III family. As to quaternary structure, homodimer. Mg(2+) is required as a cofactor.

The protein resides in the cytoplasm. It catalyses the reaction Endonucleolytic cleavage to 5'-phosphomonoester.. Digests double-stranded RNA. Involved in the processing of primary rRNA transcript to yield the immediate precursors to the large and small rRNAs (23S and 16S). Processes some mRNAs, and tRNAs when they are encoded in the rRNA operon. Processes pre-crRNA and tracrRNA of type II CRISPR loci if present in the organism. The sequence is that of Ribonuclease 3 2 from Synechocystis sp. (strain ATCC 27184 / PCC 6803 / Kazusa).